The primary structure comprises 348 residues: Dihydroorotase (348 aa).

2 residues coordinate Zn(2+): H17 and H19. Residues 19 to 21 (HLR) and N45 contribute to the substrate site. Zn(2+) is bound by residues K103, H140, and H178. K103 carries the post-translational modification N6-carboxylysine. H140 is a substrate binding site. L223 serves as a coordination point for substrate. D251 contributes to the Zn(2+) binding site. D251 is a catalytic residue. Substrate-binding residues include H255 and A267.

Belongs to the metallo-dependent hydrolases superfamily. DHOase family. Class II DHOase subfamily. As to quaternary structure, homodimer. It depends on Zn(2+) as a cofactor.

The catalysed reaction is (S)-dihydroorotate + H2O = N-carbamoyl-L-aspartate + H(+). It participates in pyrimidine metabolism; UMP biosynthesis via de novo pathway; (S)-dihydroorotate from bicarbonate: step 3/3. Its function is as follows. Catalyzes the reversible cyclization of carbamoyl aspartate to dihydroorotate. This is Dihydroorotase from Yersinia pestis.